Consider the following 651-residue polypeptide: DNA mismatch repair protein MutL (651 aa).

The segment at 336-398 (RLDMTEPETG…ANSGYQPENP (63 aa)) is disordered. The span at 385-394 (ARESANSGYQ) shows a compositional bias: polar residues.

It belongs to the DNA mismatch repair MutL/HexB family.

Functionally, this protein is involved in the repair of mismatches in DNA. It is required for dam-dependent methyl-directed DNA mismatch repair. May act as a 'molecular matchmaker', a protein that promotes the formation of a stable complex between two or more DNA-binding proteins in an ATP-dependent manner without itself being part of a final effector complex. This is DNA mismatch repair protein MutL from Pectobacterium atrosepticum (strain SCRI 1043 / ATCC BAA-672) (Erwinia carotovora subsp. atroseptica).